Here is a 483-residue protein sequence, read N- to C-terminus: Altronate oxidoreductase (483 aa).

18–29 provides a ligand contact to NAD(+); it reads IIQFGEGNFLRA.

It belongs to the mannitol dehydrogenase family. UxaB subfamily.

It catalyses the reaction D-altronate + NAD(+) = keto-D-tagaturonate + NADH + H(+). Its pathway is carbohydrate metabolism; pentose and glucuronate interconversion. This is Altronate oxidoreductase from Escherichia coli O17:K52:H18 (strain UMN026 / ExPEC).